A 588-amino-acid polypeptide reads, in one-letter code: MKFMELGFRPDTFYTVESVRSVSSDLLNDLVIQVKSTKYLLHKFPMLSKCLRLKNLVSSQETETSQEQQVIQLVDFPGETEAFELCAKFCYGITITLCAHNVVAVRCAAEYLGMTEEVELGETENLVQRLELFLTTCVFKSWRDSYVTLQTTKVLPLWSEDLGITNRCIEAIANGVTVSPGEDFSTQLETGLLRNRSRIRRDEILCNGGGGSKAESLRWWGEDLAELGLDLYRRTMVAIKSSHRKISPRLIGNALRIYASKWLPSIQESSADSNLVLESVISLLPEEKSSVPCSFLLQLLKMANVMNVSHSSKMELAIKAGNQLDKATVSELLIPLSDKSGMLYDVDVVKMMVKQFLSHISPEIRPTRTRTEHRRSRSEENINLEEIQEVRGSLSTSSSPPPLLSKVAKLVDSYLQEIARDVNLTVSKFVELAETIPDTSRICHDDLYNAIDVYLQVHKKIEKCERKRLCRILDCKKLSVEASKKAAQNELLPLRVIVQILFVEQARATLATTRNNITTNETAVLKRSFTTRREEGGQEEEERDETKPSGGFLQSTPSRFMALCAIPRQPKKLLCKLLSISRSLSQRI.

The region spanning 28 to 99 (NDLVIQVKST…CYGITITLCA (72 aa)) is the BTB domain. The NPH3 domain maps to 218–507 (RWWGEDLAEL…VQILFVEQAR (290 aa)). 2 positions are modified to phosphoserine: Ser376 and Ser378. Tyr448 is modified (phosphotyrosine). Positions 529–554 (FTTRREEGGQEEEERDETKPSGGFLQ) are disordered.

This sequence belongs to the NPH3 family.

Its pathway is protein modification; protein ubiquitination. May act as a substrate-specific adapter of an E3 ubiquitin-protein ligase complex (CUL3-RBX1-BTB) which mediates the ubiquitination and subsequent proteasomal degradation of target proteins. This Arabidopsis thaliana (Mouse-ear cress) protein is BTB/POZ domain-containing protein At3g26490.